The sequence spans 295 residues: Transcriptional regulator SirC (295 aa).

The HTH araC/xylS-type domain occupies 195–292 (EKVYNIIISD…KITPLSFMRT (98 aa)). 2 DNA-binding regions (H-T-H motif) span residues 212 to 233 (AEVA…AAEE) and 259 to 282 (ISQV…KRHF).

Functionally, positive regulator of the expression of the invasion-associated type III secretion system encoded within SPI-1 (pathogenicity island 1). The protein is Transcriptional regulator SirC (sirC) of Salmonella typhimurium (strain SL1344).